Here is a 148-residue protein sequence, read N- to C-terminus: Cathelicidin-1 (148 aa).

Positions 1–17 (MLSCWVLLLALLGGACA) are cleaved as a signal peptide. Positions 18 to 122 (LPAPLGYSQA…TCVDSMADPV (105 aa)) are excised as a propeptide. Cystine bridges form between Cys75–Cys86 and Cys97–Cys114.

The protein belongs to the cathelicidin family. As to expression, detected in gizzard, liver, small intestine, large intestine, cloaca, bursa of Fabricius, gall bladder, lung, trachea, kidney, testis and bone marrow.

The protein resides in the secreted. Functionally, binds bacterial lipopolysaccharide (LPS). Has potent antimicrobial activity against Gram-positive and Gram-negative bacteria (in vitro). Has hemolytic activity (in vitro). May play a role in the innate immune response. In Gallus gallus (Chicken), this protein is Cathelicidin-1 (CATHL1).